The following is a 443-amino-acid chain: Adenylosuccinate synthetase (443 aa).

Residues 12 to 18 and 40 to 42 contribute to the GTP site; these read GDEGKGK and GHT. Residue Asp-13 is the Proton acceptor of the active site. Mg(2+) is bound by residues Asp-13 and Gly-40. Residues 13–16, 38–41, Thr-128, Arg-142, Gln-223, Thr-238, and Arg-302 contribute to the IMP site; these read DEGK and NAGH. The Proton donor role is filled by His-41. 298 to 304 contacts substrate; that stretch reads TTTGRRR. Residues Arg-304, 330 to 332, and 412 to 414 each bind GTP; these read KLD and SLG.

This sequence belongs to the adenylosuccinate synthetase family. As to quaternary structure, homodimer. It depends on Mg(2+) as a cofactor.

Its subcellular location is the cytoplasm. It carries out the reaction IMP + L-aspartate + GTP = N(6)-(1,2-dicarboxyethyl)-AMP + GDP + phosphate + 2 H(+). It participates in purine metabolism; AMP biosynthesis via de novo pathway; AMP from IMP: step 1/2. Plays an important role in the de novo pathway of purine nucleotide biosynthesis. Catalyzes the first committed step in the biosynthesis of AMP from IMP. This Picosynechococcus sp. (strain ATCC 27264 / PCC 7002 / PR-6) (Agmenellum quadruplicatum) protein is Adenylosuccinate synthetase.